Here is a 523-residue protein sequence, read N- to C-terminus: UDP-glucuronosyltransferase 3A1 (523 aa).

The signal sequence occupies residues 1-22; it reads MVGQRVLLLVAFLLSGVLLSEA. The Extracellular portion of the chain corresponds to 23–483; sequence AKILTISTLG…YAFQQPWHEQ (461 aa). A glycan (N-linked (GlcNAc...) asparagine) is linked at asparagine 52. The chain crosses the membrane as a helical span at residues 484–504; that stretch reads YLIDVFVFLLGLTLGTMWLCG. Residues 505-523 are Cytoplasmic-facing; sequence KLLGVVARWLRGARKVKKT.

This sequence belongs to the UDP-glycosyltransferase family.

The protein localises to the membrane. The catalysed reaction is glucuronate acceptor + UDP-alpha-D-glucuronate = acceptor beta-D-glucuronoside + UDP + H(+). Its function is as follows. UDP-glucuronosyltransferases catalyze phase II biotransformation reactions in which lipophilic substrates are conjugated with glucuronic acid to increase water solubility and enhance excretion. They are of major importance in the conjugation and subsequent elimination of potentially toxic xenobiotics and endogenous compounds. This chain is UDP-glucuronosyltransferase 3A1 (UGT3A1), found in Homo sapiens (Human).